Reading from the N-terminus, the 247-residue chain is Ras-like protein family member 11B (247 aa).

The segment at A28–T245 is small GTPase-like. GTP is bound by residues G39–T46, D86–H93, and N151–D154. Positions P202–D228 are disordered.

This sequence belongs to the small GTPase superfamily. Ras family.

It catalyses the reaction GTP + H2O = GDP + phosphate + H(+). In Mus musculus (Mouse), this protein is Ras-like protein family member 11B.